We begin with the raw amino-acid sequence, 260 residues long: 4-hydroxy-tetrahydrodipicolinate reductase (260 aa).

12 to 17 contacts NAD(+); it reads GFRGKM. K40 serves as a coordination point for NADP(+). Residues 92–94 and 118–121 each bind NAD(+); these read GTT and APNF. The active-site Proton donor/acceptor is the H148. Position 149 (H149) interacts with (S)-2,3,4,5-tetrahydrodipicolinate. The active-site Proton donor is the K152. Position 158–159 (158–159) interacts with (S)-2,3,4,5-tetrahydrodipicolinate; it reads GT.

Belongs to the DapB family.

It is found in the cytoplasm. The enzyme catalyses (S)-2,3,4,5-tetrahydrodipicolinate + NAD(+) + H2O = (2S,4S)-4-hydroxy-2,3,4,5-tetrahydrodipicolinate + NADH + H(+). It carries out the reaction (S)-2,3,4,5-tetrahydrodipicolinate + NADP(+) + H2O = (2S,4S)-4-hydroxy-2,3,4,5-tetrahydrodipicolinate + NADPH + H(+). It participates in amino-acid biosynthesis; L-lysine biosynthesis via DAP pathway; (S)-tetrahydrodipicolinate from L-aspartate: step 4/4. Catalyzes the conversion of 4-hydroxy-tetrahydrodipicolinate (HTPA) to tetrahydrodipicolinate. The polypeptide is 4-hydroxy-tetrahydrodipicolinate reductase (Lactococcus lactis subsp. lactis (strain IL1403) (Streptococcus lactis)).